We begin with the raw amino-acid sequence, 914 residues long: Neuropilin-1 (914 aa).

The N-terminal stretch at 1–18 (MDWGLFLHCAALTFTLSR) is a signal peptide. Over 20–847 (LRSDKCGDTI…PGNVLKTLDP (828 aa)) the chain is Extracellular. Disulfide bonds link cysteine 25/cysteine 52, cysteine 80/cysteine 102, and cysteine 145/cysteine 171. CUB domains follow at residues 25 to 139 (CGDT…YEVF) and 145 to 263 (CSRN…YSVS). Residue asparagine 148 is glycosylated (N-linked (GlcNAc...) asparagine). Glutamate 193, aspartate 207, and aspartate 248 together coordinate Ca(2+). Cysteine 204 and cysteine 226 are joined by a disulfide. N-linked (GlcNAc...) asparagine glycosylation is present at asparagine 259. Cystine bridges form between cysteine 273–cysteine 422 and cysteine 429–cysteine 581. 2 consecutive F5/8 type C domains span residues 273 to 422 (CMEP…VYGC) and 429 to 581 (CSGM…LLGC). A glycan (N-linked (GlcNAc...) asparagine) is linked at asparagine 520. O-linked (Xyl...) (chondroitin sulfate) serine; alternate glycosylation occurs at serine 610. Serine 610 carries an O-linked (Xyl...) (heparan sulfate) serine; alternate glycan. An MAM domain is found at 636-801 (PYNLNCGFGW…NHISQEDCQK (166 aa)). Residues 809–829 (IVEEDPESNQTGFTPSYRTDE) form a disordered region. Positions 816-825 (SNQTGFTPSY) are enriched in polar residues. The N-linked (GlcNAc...) asparagine glycan is linked to asparagine 817. A helical membrane pass occupies residues 848 to 870 (ILITIIAMSALGVLLGAICGVVL). The Cytoplasmic portion of the chain corresponds to 871–914 (YCACWHNGMSERNLSALENYNFELVDGVKLKKDKLNTQNSYSEA).

Belongs to the neuropilin family. As to quaternary structure, homodimer, and heterodimer. Developing nervous system; optic tectum (layers D and E of SGFS), amacrine cells of retina, neurites of dorsal root ganglia. Also expressed in non-neuronal cells, e.g. blood vessels in the entire embryo.

It is found in the mitochondrion membrane. Its subcellular location is the cell membrane. Its function is as follows. Receptor involved in the development of the cardiovascular system, in angiogenesis, in the formation of certain neuronal circuits and in organogenesis outside the nervous system. Mediates the chemorepulsant activity of semaphorins. Binding to VEGFA initiates a signaling pathway needed for motor neuron axon guidance and cell body migration, including for the caudal migration of facial motor neurons from rhombomere 4 to rhombomere 6 during embryonic development. Regulates mitochondrial iron transport via interaction. The sequence is that of Neuropilin-1 (NRP1) from Gallus gallus (Chicken).